An 896-amino-acid polypeptide reads, in one-letter code: Translation initiation factor IF-2 (896 aa).

Disordered stretches follow at residues 53-81 and 117-301; these read HGGESAPTKMTLQRKSVSTLSVGSGSASK and AEEA…ESMD. The segment covering 60–79 has biased composition (polar residues); that stretch reads TKMTLQRKSVSTLSVGSGSA. The span at 117-227 shows a compositional bias: basic and acidic residues; it reads AEEAASKAKA…ESEKTGDHHV (111 aa). Over residues 254 to 266 the composition is skewed to low complexity; that stretch reads ATPAPAAAPANTG. Residues 273–282 are compositionally biased toward basic and acidic residues; it reads GKDNRRDSRN. The segment covering 283-294 has biased composition (low complexity); it reads ARGGRNARNNRS. The tr-type G domain occupies 394–563; that stretch reads SRAPVVTIMG…LLEAEVLELK (170 aa). Positions 403–410 are G1; the sequence is GHVDHGKT. Residue 403 to 410 coordinates GTP; that stretch reads GHVDHGKT. The interval 428–432 is G2; sequence GITQH. The tract at residues 449 to 452 is G3; that stretch reads DTPG. GTP contacts are provided by residues 449 to 453 and 503 to 506; these read DTPGH and NKID. Residues 503 to 506 form a G4 region; it reads NKID. The G5 stretch occupies residues 539–541; it reads SAK.

The protein belongs to the TRAFAC class translation factor GTPase superfamily. Classic translation factor GTPase family. IF-2 subfamily.

It is found in the cytoplasm. Functionally, one of the essential components for the initiation of protein synthesis. Protects formylmethionyl-tRNA from spontaneous hydrolysis and promotes its binding to the 30S ribosomal subunits. Also involved in the hydrolysis of GTP during the formation of the 70S ribosomal complex. The protein is Translation initiation factor IF-2 of Shewanella sediminis (strain HAW-EB3).